We begin with the raw amino-acid sequence, 239 residues long: tRNA (guanine-N(7)-)-methyltransferase (239 aa).

S-adenosyl-L-methionine is bound by residues Gly-64, 87 to 88, 120 to 121, and Leu-140; these read EI and NA. Residue Asp-143 is part of the active site. 218–220 contributes to the S-adenosyl-L-methionine binding site; sequence SEE.

This sequence belongs to the class I-like SAM-binding methyltransferase superfamily. TrmB family.

The protein resides in the nucleus. It carries out the reaction guanosine(46) in tRNA + S-adenosyl-L-methionine = N(7)-methylguanosine(46) in tRNA + S-adenosyl-L-homocysteine. The protein operates within tRNA modification; N(7)-methylguanine-tRNA biosynthesis. Its function is as follows. Catalyzes the formation of N(7)-methylguanine at position 46 (m7G46) in tRNA. The polypeptide is tRNA (guanine-N(7)-)-methyltransferase (Culex quinquefasciatus (Southern house mosquito)).